The following is a 41-amino-acid chain: Trypsin inhibitor (41 aa).

Disulfide bonds link C15–C26, C17–C24, and C29–C37.

Functionally, has two active sites that simultaneously bind and inhibit trypsin. The sequence is that of Trypsin inhibitor from Trichosanthes kirilowii (Chinese snake gourd).